A 180-amino-acid chain; its full sequence is UPF0149 protein XC_0904 (180 aa).

It belongs to the UPF0149 family.

The sequence is that of UPF0149 protein XC_0904 from Xanthomonas campestris pv. campestris (strain 8004).